Consider the following 376-residue polypeptide: Protein-glutamate methylesterase/protein-glutamine glutaminase 1 (376 aa).

One can recognise a Response regulatory domain in the interval Lys-4–Leu-121. Asp-55 carries the post-translational modification 4-aspartylphosphate. The tract at residues Arg-138–Ala-169 is disordered. The span at Ala-141–Thr-158 shows a compositional bias: polar residues. Positions Ser-183–Ala-376 constitute a CheB-type methylesterase domain. Catalysis depends on residues Ser-195, His-222, and Asp-318.

The protein belongs to the CheB family. In terms of processing, phosphorylated by CheA. Phosphorylation of the N-terminal regulatory domain activates the methylesterase activity.

It is found in the cytoplasm. It carries out the reaction [protein]-L-glutamate 5-O-methyl ester + H2O = L-glutamyl-[protein] + methanol + H(+). The catalysed reaction is L-glutaminyl-[protein] + H2O = L-glutamyl-[protein] + NH4(+). Its function is as follows. Involved in chemotaxis. Part of a chemotaxis signal transduction system that modulates chemotaxis in response to various stimuli. Catalyzes the demethylation of specific methylglutamate residues introduced into the chemoreceptors (methyl-accepting chemotaxis proteins or MCP) by CheR. Also mediates the irreversible deamidation of specific glutamine residues to glutamic acid. This Vibrio vulnificus (strain YJ016) protein is Protein-glutamate methylesterase/protein-glutamine glutaminase 1.